Reading from the N-terminus, the 404-residue chain is Argininosuccinate synthase (404 aa).

Residues 10 to 18 and Ala-38 contribute to the ATP site; that span reads AYSGGVDTS. Tyr-89 contacts L-citrulline. Gly-119 is a binding site for ATP. Thr-121, Asn-125, and Asp-126 together coordinate L-aspartate. Asn-125 contacts L-citrulline. Positions 129, 177, 186, 262, and 274 each coordinate L-citrulline.

The protein belongs to the argininosuccinate synthase family. Type 1 subfamily. Homotetramer.

Its subcellular location is the cytoplasm. It catalyses the reaction L-citrulline + L-aspartate + ATP = 2-(N(omega)-L-arginino)succinate + AMP + diphosphate + H(+). It functions in the pathway amino-acid biosynthesis; L-arginine biosynthesis; L-arginine from L-ornithine and carbamoyl phosphate: step 2/3. In Prochlorococcus marinus (strain MIT 9312), this protein is Argininosuccinate synthase.